We begin with the raw amino-acid sequence, 427 residues long: METLCLRASFWLALVGCVISDNPERYSTNLSNHVDDFTTFRGTELSFLVTTHQPTNLVLPSNGSMHNYCPQQTKITSAFKYINTVISCTIFIVGMVGNATLLRIIYQNKCMRNGPNALIASLALGDLIYVVIDLPINVFKLLAGRWPFDHNDFGVFLCKLFPFLQKSSVGITVLNLCALSVDRYRAVASWSRVQGIGIPLVTAIEIVSIWILSFILAIPEAIGFVMVPFEYRGEQHKTCMLNATSKFMEFYQDVKDWWLFGFYFCMPLVCTAIFYTLMTCEMLNRRNGSLRIALSEHLKQRREVAKTVFCLVVIFALCWFPLHLSRILKKTVYNEMDKNRCELLSFLLLMDYIGINLATMNSCINPIALYFVSKKFKNCFQSCLCCCCYQSKSLMTSVPMNGTSIQWKNHDQNNHNTDRSSHKDSMN.

A signal peptide spans 1-20 (METLCLRASFWLALVGCVIS). Residues 21–80 (DNPERYSTNLSNHVDDFTTFRGTELSFLVTTHQPTNLVLPSNGSMHNYCPQQTKITSAFK) are Extracellular-facing. 2 N-linked (GlcNAc...) asparagine glycosylation sites follow: Asn29 and Asn62. The helical transmembrane segment at 81-102 (YINTVISCTIFIVGMVGNATLL) threads the bilayer. Residues 103–112 (RIIYQNKCMR) lie on the Cytoplasmic side of the membrane. Residues 113–132 (NGPNALIASLALGDLIYVVI) form a helical membrane-spanning segment. Topologically, residues 133–159 (DLPINVFKLLAGRWPFDHNDFGVFLCK) are extracellular. Cys158 and Cys239 are disulfide-bonded. The helical transmembrane segment at 160–181 (LFPFLQKSSVGITVLNLCALSV) threads the bilayer. Residues 182–205 (DRYRAVASWSRVQGIGIPLVTAIE) lie on the Cytoplasmic side of the membrane. Residues 206–229 (IVSIWILSFILAIPEAIGFVMVPF) form a helical membrane-spanning segment. Residues 230–256 (EYRGEQHKTCMLNATSKFMEFYQDVKD) lie on the Extracellular side of the membrane. A helical transmembrane segment spans residues 257–278 (WWLFGFYFCMPLVCTAIFYTLM). Residues 279-306 (TCEMLNRRNGSLRIALSEHLKQRREVAK) lie on the Cytoplasmic side of the membrane. A helical transmembrane segment spans residues 307–328 (TVFCLVVIFALCWFPLHLSRIL). Residues 329–347 (KKTVYNEMDKNRCELLSFL) are Extracellular-facing. A helical membrane pass occupies residues 348-372 (LLMDYIGINLATMNSCINPIALYFV). Residues 373 to 427 (SKKFKNCFQSCLCCCCYQSKSLMTSVPMNGTSIQWKNHDQNNHNTDRSSHKDSMN) lie on the Cytoplasmic side of the membrane. The disordered stretch occupies residues 406–427 (QWKNHDQNNHNTDRSSHKDSMN). A compositionally biased stretch (basic and acidic residues) spans 408–427 (KNHDQNNHNTDRSSHKDSMN). Phosphoserine is present on Ser425.

The protein belongs to the G-protein coupled receptor 1 family. Endothelin receptor subfamily. EDNRA sub-subfamily. Interacts with HDAC7 and KAT5. Isoform 1, isoform 3 and isoform 4 are expressed in a variety of tissues, with highest levels in the aorta and cerebellum, followed by lung, atrium and cerebral cortex, lower levels in the placenta, kidney, adrenal gland, duodenum, colon, ventricle and liver but no expression in umbilical vein endothelial cells. Within the placenta, isoform 1, isoform 2, isoform 3 and isoform 4 are expressed in the villi and stem villi vessels.

It is found in the cell membrane. Its function is as follows. Receptor for endothelin-1. Mediates its action by association with G proteins that activate a phosphatidylinositol-calcium second messenger system. The rank order of binding affinities for ET-A is: ET1 &gt; ET2 &gt;&gt; ET3. The sequence is that of Endothelin-1 receptor from Homo sapiens (Human).